We begin with the raw amino-acid sequence, 238 residues long: Uridylate kinase (238 aa).

12-15 (KLSG) contacts ATP. UMP is bound at residue Gly-54. Positions 55 and 59 each coordinate ATP. UMP-binding positions include Asp-74 and 135 to 142 (TGNPYFTT). Residues Thr-162, Tyr-168, and Asp-171 each coordinate ATP.

Belongs to the UMP kinase family. Homohexamer.

The protein resides in the cytoplasm. It catalyses the reaction UMP + ATP = UDP + ADP. The protein operates within pyrimidine metabolism; CTP biosynthesis via de novo pathway; UDP from UMP (UMPK route): step 1/1. With respect to regulation, inhibited by UTP. In terms of biological role, catalyzes the reversible phosphorylation of UMP to UDP. The sequence is that of Uridylate kinase from Nitratidesulfovibrio vulgaris (strain ATCC 29579 / DSM 644 / CCUG 34227 / NCIMB 8303 / VKM B-1760 / Hildenborough) (Desulfovibrio vulgaris).